Reading from the N-terminus, the 249-residue chain is 5'-nucleotidase SurE (249 aa).

Positions 8, 9, 39, and 91 each coordinate a divalent metal cation.

This sequence belongs to the SurE nucleotidase family. It depends on a divalent metal cation as a cofactor.

Its subcellular location is the cytoplasm. The enzyme catalyses a ribonucleoside 5'-phosphate + H2O = a ribonucleoside + phosphate. Functionally, nucleotidase that shows phosphatase activity on nucleoside 5'-monophosphates. In Pseudomonas savastanoi pv. phaseolicola (strain 1448A / Race 6) (Pseudomonas syringae pv. phaseolicola (strain 1448A / Race 6)), this protein is 5'-nucleotidase SurE.